We begin with the raw amino-acid sequence, 143 residues long: Hemoglobin cathodic subunit alpha (143 aa).

The residue at position 2 (S2) is an N-acetylserine. The 142-residue stretch at 2–143 (SLTAKDKSLI…LGAALSDKYR (142 aa)) folds into the Globin domain. Residue H60 coordinates O2. H89 contributes to the heme b binding site.

Belongs to the globin family. In terms of assembly, heterotetramer of two alpha chains and two beta chains. As to expression, red blood cells.

Its function is as follows. Involved in oxygen transport from gills to the various peripheral tissues. The chain is Hemoglobin cathodic subunit alpha from Anguilla anguilla (European freshwater eel).